Reading from the N-terminus, the 1007-residue chain is MSRRSTTTSTNFGLSWSLVDVISSSTAVFKVPMNGGCDLWIGCARWLRDMKVLTTDKNGTMLEFASVLRDGILLCRLANTLVPNGIDQKKIMRTNQPSPFLCCNNINYFAMFCKTYFNLEDADLFTAEDLYYMNGFQKVLKTLSFLSHTKESLSRGVDPFPDTDNNQEGTSNGSEFEDDVEIYQSLHDNIENVDPNRTIYGPITSADPEEQQSEQLYDRIVTNRKPSMNENDLQNTPTLKRNRCIRELYDTEKNYVAQALVTIIKTFYEPLKGIIPTSDYNIIFGNIEEINVLHTALLADLEYPVKVALGLSDATPPRPISLNECVPQTIGEVFIKYRDQFLAYGKYCSNLPDSRKLSNELLKTNEFISRNINELTAQGNCKFGMNDLLCVPFQRLTKYPLLLKELQKKTDLASPDRKSLEEAVEVMEDVCNYINEESRDTNAIKVIDEIEQSITDLSMPLNVKLHDYGRVNLDGEVKMAESTLTQAGKPKQRYIFLFDKVIVVCKAANKVMAAKTTGASARTNTFTYKNAYVMSELTIDKNASLDVKSGGTITRRTQYVIIMTRDRNENNEITQLTFYFKNEATRNNWMTALLLSKSNVSPTDYLRDTNHKVAFHSFRVDVKNPATCDVCDKLMKGLQYQGYKCESCNMSMHKECLGLKKCEAVRKSTHETRSSQSFNCNRPRFHIHEGDIVVANSNSTPSDLSYLQFAKGDRIEVIKMQGHNRFTGCLINNRNRTGLVHLDHVSQSRTTSMIGLSPIDSPAGSIAPRVVRNESTVLPNKLLSDGSSRSLSGPHGSRSSRNSSSSTINGSMDSVPRQQDYVNTEISEFLWYMGEMERAKAESTLKGTPNGTFLVRYSKNRKQTAISLSYKNDVKHMIIEQNSDGKVYLDEDYIFNSTVELVQYYRSNNLIEIFAALDTCLKNPYSQCKVFKAVHDYDAPSPNNEGKFLSFKTGDIVVLLDTVGEDRGWWKGQVNNKSGFFPLSYVKPYDPATEGSSSPVTPTSSSS.

Residues 37 to 151 (CDLWIGCARW…TLSFLSHTKE (115 aa)) enclose the Calponin-homology (CH) domain. Residues 151 to 239 (ESLSRGVDPF…ENDLQNTPTL (89 aa)) form an AC region. A disordered region spans residues 153-176 (LSRGVDPFPDTDNNQEGTSNGSEF). Positions 163–174 (TDNNQEGTSNGS) are enriched in polar residues. Residues Tyr-183, Tyr-200, and Tyr-217 each carry the phosphotyrosine modification. A DH domain is found at 240 to 437 (KRNRCIRELY…EDVCNYINEE (198 aa)). The region spanning 470 to 598 (RVNLDGEVKM…WMTALLLSKS (129 aa)) is the PH domain. A Phorbol-ester/DAG-type zinc finger spans residues 610–664 (NHKVAFHSFRVDVKNPATCDVCDKLMKGLQYQGYKCESCNMSMHKECLGLKKCEA). An SH3 1 domain is found at 688 to 750 (HEGDIVVANS…HLDHVSQSRT (63 aa)). The tract at residues 778-817 (LPNKLLSDGSSRSLSGPHGSRSSRNSSSSTINGSMDSVPR) is disordered. A compositionally biased stretch (low complexity) spans 782–814 (LLSDGSSRSLSGPHGSRSSRNSSSSTINGSMDS). An SH2 domain is found at 831-925 (WYMGEMERAK…ALDTCLKNPY (95 aa)). The SH3 2 domain maps to 926–991 (SQCKVFKAVH…PLSYVKPYDP (66 aa)).

In terms of processing, GEF activity is regulated by phosphorylation on tyrosine residues. In terms of tissue distribution, strong expression in the pharynx, proximal gonad, spermatheca, intestine and rectal epithelia.

In terms of biological role, acts as a guanine nucleotide exchange factor (GEF) for Rho GTPase. Has a critical roles in the generation of rhythmic behaviors: feeding, defecation and ovulation by dynamically regulating the concentration of intracellular calcium. Plays a role in male tail tip morphogenesis. This chain is Protein vav-1, found in Caenorhabditis elegans.